Consider the following 277-residue polypeptide: S-formylglutathione hydrolase FrmB (277 aa).

Catalysis depends on charge relay system residues Ser145, Asp221, and His254.

The protein belongs to the esterase D family.

It carries out the reaction S-formylglutathione + H2O = formate + glutathione + H(+). Serine hydrolase involved in the detoxification of formaldehyde. Hydrolyzes S-formylglutathione to glutathione and formate. The sequence is that of S-formylglutathione hydrolase FrmB (frmB) from Escherichia coli O157:H7.